A 258-amino-acid polypeptide reads, in one-letter code: Phosphate import ATP-binding protein PstB (258 aa).

Residues 5–247 (LDLKGVNIYY…EKIFSNPTEK (243 aa)) form the ABC transporter domain. ATP is bound at residue 37-44 (GASGCGKT).

Belongs to the ABC transporter superfamily. Phosphate importer (TC 3.A.1.7) family. As to quaternary structure, the complex is composed of two ATP-binding proteins (PstB), two transmembrane proteins (PstC and PstA) and a solute-binding protein (PstS).

The protein resides in the cell membrane. It catalyses the reaction phosphate(out) + ATP + H2O = ADP + 2 phosphate(in) + H(+). Its function is as follows. Part of the ABC transporter complex PstSACB involved in phosphate import. Responsible for energy coupling to the transport system. This is Phosphate import ATP-binding protein PstB from Mycobacterium leprae (strain TN).